A 104-amino-acid chain; its full sequence is Guanyl-specific ribonuclease Ap1 (104 aa).

Disulfide bonds link C2–C10 and C6–C103. The active site involves H40. Residue E58 is the Proton acceptor of the active site. The active-site Proton donor is H92.

It belongs to the ribonuclease N1/T1 family.

The protein resides in the secreted. The catalysed reaction is [RNA] containing guanosine + H2O = an [RNA fragment]-3'-guanosine-3'-phosphate + a 5'-hydroxy-ribonucleotide-3'-[RNA fragment].. This Aspergillus pallidus protein is Guanyl-specific ribonuclease Ap1.